Here is a 156-residue protein sequence, read N- to C-terminus: Putative NrdI-like protein (156 aa).

It belongs to the NrdI family.

The polypeptide is Putative NrdI-like protein (Streptococcus pneumoniae serotype 4 (strain ATCC BAA-334 / TIGR4)).